We begin with the raw amino-acid sequence, 179 residues long: Large ribosomal subunit protein uL5 (179 aa).

It belongs to the universal ribosomal protein uL5 family. As to quaternary structure, part of the 50S ribosomal subunit; part of the 5S rRNA/L5/L18/L25 subcomplex. Contacts the 5S rRNA and the P site tRNA. Forms a bridge to the 30S subunit in the 70S ribosome.

Its function is as follows. This is one of the proteins that bind and probably mediate the attachment of the 5S RNA into the large ribosomal subunit, where it forms part of the central protuberance. In the 70S ribosome it contacts protein S13 of the 30S subunit (bridge B1b), connecting the 2 subunits; this bridge is implicated in subunit movement. Contacts the P site tRNA; the 5S rRNA and some of its associated proteins might help stabilize positioning of ribosome-bound tRNAs. The protein is Large ribosomal subunit protein uL5 of Buchnera aphidicola subsp. Cinara cedri (strain Cc).